The following is a 320-amino-acid chain: Cytochrome f (320 aa).

Positions 1 to 35 are cleaved as a signal peptide; sequence MQTRNTFSWIREEITRSISVSLMIYIITWASISSA. Positions 36, 56, 59, and 60 each coordinate heme. The helical transmembrane segment at 286 to 306 threads the bilayer; it reads VQGLLFFLGSVVLAQIFLVLK.

Belongs to the cytochrome f family. The 4 large subunits of the cytochrome b6-f complex are cytochrome b6, subunit IV (17 kDa polypeptide, petD), cytochrome f and the Rieske protein, while the 4 small subunits are PetG, PetL, PetM and PetN. The complex functions as a dimer. Heme serves as cofactor.

Its subcellular location is the plastid. The protein resides in the chloroplast thylakoid membrane. Functionally, component of the cytochrome b6-f complex, which mediates electron transfer between photosystem II (PSII) and photosystem I (PSI), cyclic electron flow around PSI, and state transitions. This chain is Cytochrome f, found in Nasturtium officinale (Watercress).